The primary structure comprises 410 residues: Peptidase T (410 aa).

H79 contributes to the Zn(2+) binding site. Residue D81 is part of the active site. A Zn(2+)-binding site is contributed by D142. E176 functions as the Proton acceptor in the catalytic mechanism. Positions 177, 199, and 381 each coordinate Zn(2+).

The protein belongs to the peptidase M20B family. Zn(2+) serves as cofactor.

It is found in the cytoplasm. It carries out the reaction Release of the N-terminal residue from a tripeptide.. Its function is as follows. Cleaves the N-terminal amino acid of tripeptides. This is Peptidase T from Bacillus cereus (strain G9842).